A 412-amino-acid chain; its full sequence is Multifunctional CCA protein (412 aa).

ATP-binding residues include G8 and R11. The CTP site is built by G8 and R11. 2 residues coordinate Mg(2+): D21 and D23. Residues R91, R137, and R140 each contribute to the ATP site. Positions 91, 137, and 140 each coordinate CTP. In terms of domain architecture, HD spans 228 to 329 (TGIHTLMTLS…VKLFDSIDAW (102 aa)).

The protein belongs to the tRNA nucleotidyltransferase/poly(A) polymerase family. Bacterial CCA-adding enzyme type 1 subfamily. Monomer. Can also form homodimers and oligomers. Mg(2+) serves as cofactor. Requires Ni(2+) as cofactor.

It catalyses the reaction a tRNA precursor + 2 CTP + ATP = a tRNA with a 3' CCA end + 3 diphosphate. The catalysed reaction is a tRNA with a 3' CCA end + 2 CTP + ATP = a tRNA with a 3' CCACCA end + 3 diphosphate. Functionally, catalyzes the addition and repair of the essential 3'-terminal CCA sequence in tRNAs without using a nucleic acid template. Adds these three nucleotides in the order of C, C, and A to the tRNA nucleotide-73, using CTP and ATP as substrates and producing inorganic pyrophosphate. tRNA 3'-terminal CCA addition is required both for tRNA processing and repair. Also involved in tRNA surveillance by mediating tandem CCA addition to generate a CCACCA at the 3' terminus of unstable tRNAs. While stable tRNAs receive only 3'-terminal CCA, unstable tRNAs are marked with CCACCA and rapidly degraded. The polypeptide is Multifunctional CCA protein (Escherichia coli (strain SMS-3-5 / SECEC)).